The chain runs to 1103 residues: Isoleucine--tRNA ligase (1103 aa).

Positions Met-1–Pro-25 are disordered. A 'HIGH' region motif is present at residues Pro-65 to His-75. Residues Lys-649–His-653 carry the 'KMSKS' region motif. Lys-652 is an ATP binding site.

This sequence belongs to the class-I aminoacyl-tRNA synthetase family. IleS type 2 subfamily. In terms of assembly, monomer. Zn(2+) is required as a cofactor.

It is found in the cytoplasm. The catalysed reaction is tRNA(Ile) + L-isoleucine + ATP = L-isoleucyl-tRNA(Ile) + AMP + diphosphate. Functionally, catalyzes the attachment of isoleucine to tRNA(Ile). As IleRS can inadvertently accommodate and process structurally similar amino acids such as valine, to avoid such errors it has two additional distinct tRNA(Ile)-dependent editing activities. One activity is designated as 'pretransfer' editing and involves the hydrolysis of activated Val-AMP. The other activity is designated 'posttransfer' editing and involves deacylation of mischarged Val-tRNA(Ile). This is Isoleucine--tRNA ligase from Bifidobacterium longum (strain NCC 2705).